The primary structure comprises 678 residues: DNA ligase (678 aa).

Residues 32 to 36 (DSEYD), 81 to 82 (SL), and E113 each bind NAD(+). The N6-AMP-lysine intermediate role is filled by K115. NAD(+) is bound by residues R136, E174, K291, and K315. Positions 409, 412, 427, and 433 each coordinate Zn(2+). The 83-residue stretch at 596–678 (ASDNPFAGKT…MRLLGESSDA (83 aa)) folds into the BRCT domain.

This sequence belongs to the NAD-dependent DNA ligase family. LigA subfamily. The cofactor is Mg(2+). It depends on Mn(2+) as a cofactor.

The enzyme catalyses NAD(+) + (deoxyribonucleotide)n-3'-hydroxyl + 5'-phospho-(deoxyribonucleotide)m = (deoxyribonucleotide)n+m + AMP + beta-nicotinamide D-nucleotide.. DNA ligase that catalyzes the formation of phosphodiester linkages between 5'-phosphoryl and 3'-hydroxyl groups in double-stranded DNA using NAD as a coenzyme and as the energy source for the reaction. It is essential for DNA replication and repair of damaged DNA. In Sodalis glossinidius (strain morsitans), this protein is DNA ligase.